A 193-amino-acid chain; its full sequence is Cerebellin-1 (193 aa).

The N-terminal stretch at 1-21 is a signal peptide; that stretch reads MLGVVELLLLGAAWLAGPARG. An N-linked (GlcNAc...) asparagine glycan is attached at Asn23. Residues 34–38 form an essential for interaction with NRXN1 and linker of two C1q trimers into disulfide-linked hexamers region; that stretch reads CLVVC. Residues 57 to 193 enclose the C1q domain; it reads SGSAKVAFSA…TFSGFLVFPL (137 aa). The tract at residues 62 to 193 is necessary for interaction with CBLN3, and homotrimerization; that stretch reads VAFSAIRSTN…TFSGFLVFPL (132 aa). N-linked (GlcNAc...) asparagine glycosylation occurs at Asn79. Residues 122 to 147 are essential for interaction with GRID2; it reads YNRQTIQVSLMLNGWPVISAFAGDQD.

Homohexamer; disulfide-linked homotrimers. The trimers are assembled via the globular C1q domains. The trimers associate via N-terminal cysteine residues to form disulfide-linked hexamers. May form oligomers with CBLN2, CBLN3 and CBLN4 prior to secretion. Once secreted, does not interact with other CBLN family members. Interacts with GRID1. Interacts with NRXN1 and NRXN2 long (alpha) and short (beta) isoforms produced by alternative promoter usage. Competes with NLGN1 for NRXN1-binding. Weakly interacts with NRXN3 short isoform and not at all with NRXN3 long isoform. Interacts (via C1q domain) with GRID2; GRID2-binding is calcium-independent; CBLN1 hexamers anchor GRID2 N-terminal domain dimers to monomeric NRXN1 isoform beta; promotes synaptogenesis and mediates the D-Serine-dependent long term depression signals and AMPA receptor endocytosis. In terms of processing, the proteolytic processing to yield cerebellin seems to occur either prior to the secretion by presynaptic neurons and subsequent oligomerization or in some other location after release of the mature protein. Sialoglycoprotein.

Its subcellular location is the secreted. It is found in the postsynaptic cell membrane. Functionally, required for synapse integrity and synaptic plasticity. During cerebellar synapse formation, essential for the matching and maintenance of pre- and post-synaptic elements at parallel fiber-Purkinje cell synapses, the establishment of the proper pattern of climbing fiber-Purkinje cell innervation, and induction of long-term depression at parallel fiber-Purkinje cell synapses. Plays a role as a synaptic organizer that acts bidirectionally on both pre- and post-synaptic components. On the one hand induces accumulation of synaptic vesicles in the pre-synaptic part by binding with NRXN1 and in other hand induces clustering of GRID2 and its associated proteins at the post-synaptic site through association of GRID2. NRXN1-CBLN1-GRID2 complex directly induces parallel fiber protrusions that encapsulate spines of Purkinje cells leading to accumulation of GRID2 and synaptic vesicles. Required for CBLN3 export from the endoplasmic reticulum and secretion. NRXN1-CBLN1-GRID2 complex mediates the D-Serine-dependent long term depression signals and AMPA receptor endocytosis. Essential for long-term maintenance but not establishment of excitatory synapses. Inhibits the formation and function of inhibitory GABAergic synapses in cerebellar Purkinje cells. In terms of biological role, the cerebellin peptide exerts neuromodulatory functions. Directly stimulates norepinephrine release via the adenylate cyclase/PKA-dependent signaling pathway; and indirectly enhances adrenocortical secretion in vivo, through a paracrine mechanism involving medullary catecholamine release. The sequence is that of Cerebellin-1 from Bos taurus (Bovine).